We begin with the raw amino-acid sequence, 921 residues long: Protein translocase subunit SecA (921 aa).

ATP-binding positions include glutamine 87, 105–109 (GEGKT), and aspartate 516. Residues cysteine 905, cysteine 907, cysteine 916, and histidine 917 each contribute to the Zn(2+) site.

This sequence belongs to the SecA family. As to quaternary structure, monomer and homodimer. Part of the essential Sec protein translocation apparatus which comprises SecA, SecYEG and auxiliary proteins SecDF-YajC and YidC. Requires Zn(2+) as cofactor.

The protein localises to the cell inner membrane. Its subcellular location is the cytoplasm. It carries out the reaction ATP + H2O + cellular proteinSide 1 = ADP + phosphate + cellular proteinSide 2.. In terms of biological role, part of the Sec protein translocase complex. Interacts with the SecYEG preprotein conducting channel. Has a central role in coupling the hydrolysis of ATP to the transfer of proteins into and across the cell membrane, serving both as a receptor for the preprotein-SecB complex and as an ATP-driven molecular motor driving the stepwise translocation of polypeptide chains across the membrane. This Albidiferax ferrireducens (strain ATCC BAA-621 / DSM 15236 / T118) (Rhodoferax ferrireducens) protein is Protein translocase subunit SecA.